The primary structure comprises 178 residues: Large ribosomal subunit protein uL6 (178 aa).

This sequence belongs to the universal ribosomal protein uL6 family. Part of the 50S ribosomal subunit.

In terms of biological role, this protein binds to the 23S rRNA, and is important in its secondary structure. It is located near the subunit interface in the base of the L7/L12 stalk, and near the tRNA binding site of the peptidyltransferase center. The polypeptide is Large ribosomal subunit protein uL6 (Gluconobacter oxydans (strain 621H) (Gluconobacter suboxydans)).